We begin with the raw amino-acid sequence, 210 residues long: Superoxide dismutase [Mn], mitochondrial (210 aa).

Residues His29, His77, Asp164, and His168 each contribute to the Mn(2+) site.

It belongs to the iron/manganese superoxide dismutase family. As to quaternary structure, homotetramer. The cofactor is Mn(2+).

Its subcellular location is the mitochondrion matrix. The catalysed reaction is 2 superoxide + 2 H(+) = H2O2 + O2. In terms of biological role, destroys superoxide anion radicals which are normally produced within the cells and which are toxic to biological systems. The sequence is that of Superoxide dismutase [Mn], mitochondrial (sodB) from Aspergillus oryzae (strain ATCC 42149 / RIB 40) (Yellow koji mold).